We begin with the raw amino-acid sequence, 580 residues long: Dihydroxy-acid dehydratase (580 aa).

Asp95 serves as a coordination point for Mg(2+). Position 136 (Cys136) interacts with [2Fe-2S] cluster. The Mg(2+) site is built by Asp137 and Lys138. At Lys138 the chain carries N6-carboxylysine. A [2Fe-2S] cluster-binding site is contributed by Cys209. Residue Glu462 participates in Mg(2+) binding. The active-site Proton acceptor is Ser488.

It belongs to the IlvD/Edd family. Homodimer. Requires [2Fe-2S] cluster as cofactor. Mg(2+) is required as a cofactor.

The catalysed reaction is (2R)-2,3-dihydroxy-3-methylbutanoate = 3-methyl-2-oxobutanoate + H2O. It catalyses the reaction (2R,3R)-2,3-dihydroxy-3-methylpentanoate = (S)-3-methyl-2-oxopentanoate + H2O. It participates in amino-acid biosynthesis; L-isoleucine biosynthesis; L-isoleucine from 2-oxobutanoate: step 3/4. It functions in the pathway amino-acid biosynthesis; L-valine biosynthesis; L-valine from pyruvate: step 3/4. Functions in the biosynthesis of branched-chain amino acids. Catalyzes the dehydration of (2R,3R)-2,3-dihydroxy-3-methylpentanoate (2,3-dihydroxy-3-methylvalerate) into 2-oxo-3-methylpentanoate (2-oxo-3-methylvalerate) and of (2R)-2,3-dihydroxy-3-methylbutanoate (2,3-dihydroxyisovalerate) into 2-oxo-3-methylbutanoate (2-oxoisovalerate), the penultimate precursor to L-isoleucine and L-valine, respectively. In Leuconostoc mesenteroides subsp. mesenteroides (strain ATCC 8293 / DSM 20343 / BCRC 11652 / CCM 1803 / JCM 6124 / NCDO 523 / NBRC 100496 / NCIMB 8023 / NCTC 12954 / NRRL B-1118 / 37Y), this protein is Dihydroxy-acid dehydratase.